The following is an 81-amino-acid chain: Cytoplasmic envelopment protein 3 (81 aa).

A lipid anchor (N-myristoyl glycine; by host) is attached at Gly2. Positions 22-23 match the Di-leucine-like internalization motif motif; it reads LV. Residues 41 to 47 are asp/Glu-rich (acidic); sequence DFDENVT. Positions 47-81 are disordered; it reads TEDADKSTQRRPRVIDVTPKRKPSGKSSHSKCAKC. Positions 66–81 are enriched in basic residues; it reads KRKPSGKSSHSKCAKC.

This sequence belongs to the herpesviridae cytoplasmic envelopment protein 3 family. Interacts with cytoplasmic envelopment protein 2; this interaction is essential for the proper localization of each protein to the assembly complex and thus for the production of infectious virus. Post-translationally, myristoylation and palmitoylation (probably on one or more of the nearby cysteines at the N-terminus) enable membrane-binding and Golgi apparatus-specific targeting and are essential for efficient packaging. Phosphorylated. Phosphorylation does not seem to be required for recycling to the host Golgi apparatus. Packaging is selective for underphosphorylated forms.

The protein resides in the virion tegument. The protein localises to the virion membrane. It localises to the host cell membrane. Its subcellular location is the host Golgi apparatus membrane. Functionally, plays an important role in the cytoplasmic envelopment of tegument proteins and capsids during the assembly and egress processes. Also participates in viral entry at the fusion step probably by regulating the core fusion machinery. This is Cytoplasmic envelopment protein 3 from Homo sapiens (Human).